Reading from the N-terminus, the 199-residue chain is GTP-binding protein Di-Ras2 (199 aa).

GTP is bound by residues 14-21 (GAGGVGKS), 33-39 (RESYIPT), 61-65 (DTTGS), and 121-124 (NKCD). A Phosphoserine modification is found at S35. The Effector region signature appears at 36–44 (YIPTVEDTY). At S126 the chain carries Phosphoserine. 152 to 153 (AK) is a GTP binding site. At C196 the chain carries Cysteine methyl ester. C196 is lipidated: S-geranylgeranyl cysteine. The propeptide at 197-199 (VIM) is removed in mature form.

This sequence belongs to the small GTPase superfamily. Di-Ras family. In terms of processing, ubiquitinated by the ECS(ASB11) complex via 'Lys-11'-linked ubiquitin chains, leading to its degradation by the proteasome.

It localises to the cell membrane. The enzyme catalyses GTP + H2O = GDP + phosphate + H(+). Displays low GTPase activity and exists predominantly in the GTP-bound form. The polypeptide is GTP-binding protein Di-Ras2 (DIRAS2) (Pongo abelii (Sumatran orangutan)).